Consider the following 196-residue polypeptide: MYDYIKGILTKITAKYIVVETQGVGYILQVANPYAYSGQVQQEVTVYTHQVIREDAHLLYGFATENEKSVFLSLISVSGIGPTTALAIIAVDDNDGLVRAIEQKNITYLTKFPKIGKKTAQQMILDLEGKFVMSEEAGPVQQVAPSSENIALEEAMEAMEALGYRPAELKKIKKFFEGTNDTAENYIKSALKMLMK.

Residues 1-63 (MYDYIKGILT…EDAHLLYGFA (63 aa)) are domain I. The tract at residues 64–142 (TENEKSVFLS…MSEEAGPVQQ (79 aa)) is domain II. Residues 142–146 (QVAPS) are flexible linker. A domain III region spans residues 147 to 196 (SENIALEEAMEAMEALGYRPAELKKIKKFFEGTNDTAENYIKSALKMLMK).

This sequence belongs to the RuvA family. As to quaternary structure, homotetramer. Forms an RuvA(8)-RuvB(12)-Holliday junction (HJ) complex. HJ DNA is sandwiched between 2 RuvA tetramers; dsDNA enters through RuvA and exits via RuvB. An RuvB hexamer assembles on each DNA strand where it exits the tetramer. Each RuvB hexamer is contacted by two RuvA subunits (via domain III) on 2 adjacent RuvB subunits; this complex drives branch migration. In the full resolvosome a probable DNA-RuvA(4)-RuvB(12)-RuvC(2) complex forms which resolves the HJ.

The protein localises to the cytoplasm. The RuvA-RuvB-RuvC complex processes Holliday junction (HJ) DNA during genetic recombination and DNA repair, while the RuvA-RuvB complex plays an important role in the rescue of blocked DNA replication forks via replication fork reversal (RFR). RuvA specifically binds to HJ cruciform DNA, conferring on it an open structure. The RuvB hexamer acts as an ATP-dependent pump, pulling dsDNA into and through the RuvAB complex. HJ branch migration allows RuvC to scan DNA until it finds its consensus sequence, where it cleaves and resolves the cruciform DNA. The chain is Holliday junction branch migration complex subunit RuvA from Streptococcus suis (strain 98HAH33).